Reading from the N-terminus, the 162-residue chain is Probable chemoreceptor glutamine deamidase CheD 3 (162 aa).

The protein belongs to the CheD family.

The enzyme catalyses L-glutaminyl-[protein] + H2O = L-glutamyl-[protein] + NH4(+). Its function is as follows. Probably deamidates glutamine residues to glutamate on methyl-accepting chemotaxis receptors (MCPs), playing an important role in chemotaxis. This is Probable chemoreceptor glutamine deamidase CheD 3 from Geobacter sulfurreducens (strain ATCC 51573 / DSM 12127 / PCA).